A 1235-amino-acid polypeptide reads, in one-letter code: Insulin receptor substrate 1 (1235 aa).

Ser3 carries the phosphoserine modification. The mediates interaction with PHIP stretch occupies residues 3–133; the sequence is SPPDTDGFSD…AGGGCGGSCS (131 aa). One can recognise a PH domain in the interval 12-115; that stretch reads DVRKVGYLRK…WYQALLQLHN (104 aa). At Ser99 the chain carries Phosphoserine; by CK2. An IRS-type PTB domain is found at 155–259; it reads FKEVWQVILK…EAMRAMSDEF (105 aa). The disordered stretch occupies residues 258–425; it reads EFRPRTKSQS…SDGGFISSDE (168 aa). A phosphoserine; by RPS6KB1 mark is found at Ser265 and Ser302. Residues 265–276 show a composition bias toward low complexity; sequence SQSSSSCSNPIS. A Phosphoserine; by IKKB, MAPK8 and RPS6KB1 modification is found at Ser307. Phosphoserine occurs at positions 318, 325, 340, and 343. The segment covering 349-358 has biased composition (basic residues); it reads THAHRHRGSS. Low complexity-rich tracts occupy residues 378 to 399 and 407 to 419; these read SPSATSPVSLSSSSTSGHGSTS and SSASVSGSPSDGG. Ser414 is subject to Phosphoserine. 2 positions are modified to phosphothreonine: Thr441 and Thr448. Position 460 is a phosphotyrosine; by INSR (Tyr460). A YXXM motif 1 motif is present at residues 460–463; the sequence is YICM. Thr502 carries the phosphothreonine; by CK2 modification. The tract at residues 520–539 is disordered; it reads THSAGTSPTISHQKTPSQSS. Phosphoserine; by RPS6KB1 is present on Ser522. The span at 522–539 shows a compositional bias: polar residues; sequence SAGTSPTISHQKTPSQSS. Short sequence motifs (YXXM motif) lie at residues 546 to 549 and 608 to 611; these read YTEM and YMPM. Position 608 is a phosphotyrosine; by INSR (Tyr608). Ser612 is subject to Phosphoserine. Tyr628 carries the phosphotyrosine; by INSR modification. The short motif at 628-631 is the YXXM motif 4 element; sequence YMPM. A Phosphoserine; by RPS6KB1 and ROCK2 modification is found at Ser632. Tyr658 bears the Phosphotyrosine mark. The YXXM motif 5 signature appears at 658–661; the sequence is YMMM. Residues 669 to 689 show a composition bias toward low complexity; it reads PDIGGGSCSSSSISAAPSGSS. The tract at residues 669 to 720 is disordered; the sequence is PDIGGGSCSSSSISAAPSGSSYGKPWTNGVGGHHTHALPHAKPPVESGGGKL. The short motif at 727–730 is the YXXM motif 6 element; the sequence is YMNM. Positions 766-921 are disordered; that stretch reads FKHTQRPGEP…ATSRSSPSVR (156 aa). The segment covering 771 to 780 has biased composition (basic and acidic residues); the sequence is RPGEPEEGAR. 3 stretches are compositionally biased toward low complexity: residues 785-794, 801-810, and 872-881; these read RLSSSSGRLR, DSSSSTSSDS, and QQQQQQQQQQ. Residue Ser789 is modified to Phosphoserine; by AMPK and SIK2. A Phosphoserine modification is found at Ser891. Tyr895, Tyr939, and Tyr987 each carry phosphotyrosine; by INSR. The GRB2-binding stretch occupies residues 895–897; it reads YVN. 3 short sequence motifs (YXXM motif) span residues 939-942, 987-990, and 1010-1013; these read YMNM, YMTM, and YADM. Positions 1024–1165 are disordered; the sequence is LPRTTGAAPP…SAPGCGAAGG (142 aa). Residues 1025-1046 show a composition bias toward low complexity; that stretch reads PRTTGAAPPPSSTASASASVTP. The span at 1072-1084 shows a compositional bias: polar residues; the sequence is TRVNLSPNHNQSA. Ser1099 carries the phosphoserine modification. Ser1100 is subject to Phosphoserine; by RPS6KB1. The segment covering 1101-1114 has biased composition (polar residues); it reads ETFSAPTRAANTVS. The segment covering 1118-1128 has biased composition (gly residues); that stretch reads GAAGGGSGGGS. Tyr1172 bears the Phosphotyrosine; by INSR mark. The disordered stretch occupies residues 1177-1235; it reads LVKDVKQHPQDCPSQQQSLPPPPPHQPLGSNEGSSPRRSSEDLSTYASINFQKQPEDRQ. Residue Lys1179 forms a Glycyl lysine isopeptide (Lys-Gly) (interchain with G-Cter in ubiquitin) linkage. Polar residues predominate over residues 1204–1229; the sequence is LGSNEGSSPRRSSEDLSTYASINFQK. Tyr1222 bears the Phosphotyrosine; by INSR mark.

Interacts with SOCS7. Interacts (via IRS-type PTB domain) with IGF1R and INSR (via the tyrosine-phosphorylated NPXY motif). Interacts with UBTF, FER and PIK3CA. Interacts (via phosphorylated YXXM motifs) with PIK3R1. Interacts with ROCK1. Interacts (via PH domain) with PHIP. Interacts with GRB2. Interacts with ALK. Interacts with EIF2AK2/PKR. Interacts with GKAP1. Interacts with DGKZ in the absence of insulin; insulin stimulation decreases this interaction. Found in a ternary complex with DGKZ and PIP5K1A in the absence of insulin stimulation. Interacts with SQSTM1; the interaction is disrupted by the presence of tensin TNS2. Interacts with NCK1 (via SH2 domain). Interacts with NCK2 (via SH3 domain). Interacts with SH2B1; this interaction enhances leptin-induced activation of the PI3-kinase pathway. Interacts with DVL2; this interaction promotes the Wnt/beta-catenin signaling pathway. Interacts with JAK1. In terms of processing, serine phosphorylation of IRS1 is a mechanism for insulin resistance. Ser-307 phosphorylation inhibits insulin action through disruption of IRS1 interaction with the insulin receptor, and Ser-789 phosphorylation is increased in the liver of insulin-resistant rats. Phosphorylation of Tyr-895 is required for GRB2-binding. Phosphorylated by ALK. Phosphorylated at Ser-265, Ser-302, Ser-632 and Ser-1100 by RPS6KB1; phosphorylation induces accelerated degradation of IRS1. Phosphorylated on tyrosine residues in response to insulin. In skeletal muscles, dephosphorylated on Tyr-608 by TNS2 under anabolic conditions; dephosphorylation results in the proteasomal degradation of IRS1. Ubiquitinated by the Cul7-RING(FBXW8) complex in a mTOR-dependent manner, leading to its degradation: the Cul7-RING(FBXW8) complex recognizes and binds IRS1 previously phosphorylated by S6 kinase (RPS6KB1 or RPS6KB2). Ubiquitinated by TRAF4 through 'Lys-29' linkage; this ubiquitination regulates the interaction of IRS1 with IGFR and IRS1 tyrosine phosphorylation upon IGF1 stimulation. Post-translationally, S-nitrosylation at by BLVRB inhibits its activity.

Its subcellular location is the cytoplasm. The protein resides in the nucleus. Its function is as follows. Signaling adapter protein that participates in the signal transduction from two prominent receptor tyrosine kinases, insulin receptor/INSR and insulin-like growth factor I receptor/IGF1R. Plays therefore an important role in development, growth, glucose homeostasis as well as lipid metabolism. Upon phosphorylation by the insulin receptor, functions as a signaling scaffold that propagates insulin action through binding to SH2 domain-containing proteins including the p85 regulatory subunit of PI3K, NCK1, NCK2, GRB2 or SHP2. Recruitment of GRB2 leads to the activation of the guanine nucleotide exchange factor SOS1 which in turn triggers the Ras/Raf/MEK/MAPK signaling cascade. Activation of the PI3K/AKT pathway is responsible for most of insulin metabolic effects in the cell, and the Ras/Raf/MEK/MAPK is involved in the regulation of gene expression and in cooperation with the PI3K pathway regulates cell growth and differentiation. Acts a positive regulator of the Wnt/beta-catenin signaling pathway through suppression of DVL2 autophagy-mediated degradation leading to cell proliferation. The protein is Insulin receptor substrate 1 (Irs1) of Rattus norvegicus (Rat).